Consider the following 352-residue polypeptide: MVFRIASSPYTHNQRQTSRIMLLVLLAAVPGIAAQLWFFGWGTLVQILLASVSTLLAEALVLKLRKQSVAATLKDNSALLTGLLLAVSIPPLAPWWMVVLGTVFAVIIAKQLYGGLGQNPFNPAMIGYVVLLISFPVQMTSWLPPHEIAVNIPGFIDAIQVIFSGHTASGADMNTLHLGIDGISQATPLDTFKTSVRAGHSVEQIMQYPIYSGILAGAGWQWVNLAWLAGGLWLLWQKAIRWHIPLSFLVTLALCATLGWLFSPETLAAPQIHLLSGATMLGAFFILTDPVTASTTNRGRLIFGALAGLLVWLIRSFGGYPDGVAFAVLLANITVPLIDYYTRPRVYGHRKG.

Transmembrane regions (helical) follow at residues 20–40 (IMLL…WFFG), 42–62 (GTLV…ALVL), 89–109 (IPPL…VIIA), and 123–143 (PAMI…TSWL). Thr187 bears the FMN phosphoryl threonine mark. The next 5 membrane-spanning stretches (helical) occupy residues 214–234 (ILAG…GLWL), 242–262 (WHIP…GWLF), 267–287 (LAAP…FFIL), 301–321 (LIFG…GGYP), and 322–342 (DGVA…DYYT).

This sequence belongs to the NqrB/RnfD family. As to quaternary structure, the complex is composed of six subunits: RsxA, RsxB, RsxC, RsxD, RsxE and RsxG. FMN serves as cofactor.

Its subcellular location is the cell inner membrane. Part of a membrane-bound complex that couples electron transfer with translocation of ions across the membrane. Required to maintain the reduced state of SoxR. The protein is Ion-translocating oxidoreductase complex subunit D of Shigella boydii serotype 18 (strain CDC 3083-94 / BS512).